The primary structure comprises 162 residues: Caveolin-2 (162 aa).

Topologically, residues 1–86 are cytoplasmic; that stretch reads MGLETEKADV…FEISKYVMYK (86 aa). Tyrosine 19 bears the Phosphotyrosine mark. Phosphoserine is present on residues serine 20 and serine 36. An intramembrane region (helical) is located at residues 87-107; the sequence is FLTVFLAIPLAFVAGILFATL. The Cytoplasmic portion of the chain corresponds to 108-162; it reads SCLHIWIIMPFVKTCLMVLPSVQTIWKSVTDVIIAPLCTSVGRSFSSISLQLSHD.

The protein belongs to the caveolin family. In terms of assembly, homodimer. Caveolin-1 and -2 colocalize and form a stable hetero-oligomeric complex.

Its subcellular location is the golgi apparatus membrane. It is found in the cell membrane. It localises to the membrane. The protein resides in the caveola. Its function is as follows. May act as a scaffolding protein within caveolar membranes. Interacts directly with G-protein alpha subunits and can functionally regulate their activity. Caveolin-2 may function as an accessory protein in conjunction with caveolin-1. This chain is Caveolin-2 (CAV2), found in Microcebus murinus (Gray mouse lemur).